An 874-amino-acid chain; its full sequence is MDSRLALATEEPIKKDSLKKYKILCVVLLALLVIVSLGLGLGLGLRKPEEQGSCRKKCFDSSHRGLEGCRCDSGCTGRGDCCWDFEDTCVKSTQIWTCNLFRCGENRLETALCSCADDCLQRKDCCADYKTVCQGESPWVTEACASSQEPQCPPGFDLPPVILFSMDGFRAEYLQTWSTLLPNINKLKTCGIHSKYMRAMYPTKTFPNHYTIVTGLYPESHGIIDNNMYDVHLNKNFSLSSVEKSNPAWWSGQPIWLTAMYQGLKAACYYWPGSDVAVNGSFPTIYRNYSNSVPYERRITTLLQWLDLPKADRPSFYTIYVEEPDSAGHSSGPVSAGVIKALQSVDNAFGMLMEGLKQRNLHNCVNIIVLADHGMDQTSCDRVEYMTDYFPKINFYMYQGPAPRIRTRNIPQDFFTFNSEEIVRNLSCRKPDQHFKPYLTPDLPKRLHYAKNVRIDKAHLMVDRQWLAFRSKGSSNCGGGTHGYNNEFKSMEAIFLAHGPSFIEKTVIEPFENIEVYNLLCDLLHIEPAPNNGTHGSLNHLLKTPFYKPSHAGELSTPADCGFTTPLPTDPLDCSCPALQNTPGLEEQANQRLNLSEGEVAATVKANLPFGRPRVMQKNGDHCLLYHRDYISGYGKAMKMPMWSSYTVLKPGDTSSLPPTVPDCLRADVRVAPSESQKCSFYLADKNITHGFLYPAIKGTNESRYDALITSNLVPMYKEFKKMWDYFHEVLLIKYAIERNGLNVVSGPIFDYNYDGHFDAPDEITQYVAGTDVPIPTHYFVVLTSCKDQTHTPDSCPGWLDVLPFIVPHRPTNIESCSENKTEDLWVEERFQAHAARVRDVELLTGLDFYQEKAQPVSQILQLKTYLPTFETII.

At 1-11 the chain is on the cytoplasmic side; it reads MDSRLALATEE. The helical; Signal-anchor for type II membrane protein transmembrane segment at 12–30 threads the bilayer; that stretch reads PIKKDSLKKYKILCVVLLA. Over 31 to 874 the chain is Extracellular; it reads LLVIVSLGLG…TYLPTFETII (844 aa). SMB domains lie at 51–93 and 94–138; these read QGSC…VKST and QIWT…GESP. 13 disulfides stabilise this stretch: cysteine 54/cysteine 58, cysteine 54/cysteine 71, cysteine 58/cysteine 89, cysteine 69/cysteine 71, cysteine 69/cysteine 82, cysteine 75/cysteine 81, cysteine 82/cysteine 89, cysteine 98/cysteine 115, cysteine 103/cysteine 133, cysteine 113/cysteine 126, cysteine 119/cysteine 125, cysteine 144/cysteine 190, and cysteine 152/cysteine 364. The short motif at 78–80 is the Cell attachment site element; sequence RGD. The segment at 160–544 is phosphodiesterase; it reads PVILFSMDGF…HGSLNHLLKT (385 aa). Aspartate 167 lines the Zn(2+) pocket. Lysine 204 serves as a coordination point for ATP. Zn(2+) is bound at residue threonine 205. The Nucleophile role is filled by threonine 205. Asparagine 226 is a binding site for ATP. A glycan (N-linked (GlcNAc...) asparagine) is linked at asparagine 236. Aspartate 275 lines the ATP pocket. Asparagine 279 and asparagine 288 each carry an N-linked (GlcNAc...) asparagine glycan. Tyrosine 289 is a binding site for ATP. Zn(2+)-binding residues include aspartate 325, histidine 329, aspartate 372, and histidine 373. Disulfide bonds link cysteine 380-cysteine 477, cysteine 428-cysteine 817, cysteine 561-cysteine 623, cysteine 574-cysteine 679, cysteine 576-cysteine 664, and cysteine 786-cysteine 796. Asparagine 425 carries N-linked (GlcNAc...) asparagine glycosylation. Histidine 482 provides a ligand contact to Zn(2+). N-linked (GlcNAc...) asparagine glycosylation is found at asparagine 532, asparagine 594, asparagine 687, and asparagine 701. Residues 581–874 form a nuclease region; that stretch reads NTPGLEEQAN…TYLPTFETII (294 aa). Aspartate 751, asparagine 753, aspartate 755, histidine 757, and aspartate 759 together coordinate Ca(2+). Asparagine 820 carries an N-linked (GlcNAc...) asparagine glycan.

Monomer and homodimer. It depends on Zn(2+) as a cofactor. Post-translationally, N-glycosylated. N-glycosylation is necessary for normal transport to the cell membrane, but is not the apical targeting signal. In terms of tissue distribution, detected at the tip of villi in the small intestine. Detected on basophils and mast cells (at protein level). Detected in the epithelial layer of the small intestine; expression is higher in the proximal part and lower in the distal part of the small intestine.

Its subcellular location is the cell membrane. It localises to the apical cell membrane. The protein resides in the secreted. It carries out the reaction a ribonucleoside 5'-triphosphate + H2O = a ribonucleoside 5'-phosphate + diphosphate + H(+). The enzyme catalyses UDP-N-acetyl-alpha-D-glucosamine + H2O = N-acetyl-alpha-D-glucosamine 1-phosphate + UMP + 2 H(+). It catalyses the reaction ATP + H2O = AMP + diphosphate + H(+). The catalysed reaction is CTP + H2O = CMP + diphosphate + H(+). It carries out the reaction GTP + H2O = GMP + diphosphate + H(+). The enzyme catalyses UTP + H2O = UMP + diphosphate + H(+). It catalyses the reaction Hydrolytically removes 5'-nucleotides successively from the 3'-hydroxy termini of 3'-hydroxy-terminated oligonucleotides.. The catalysed reaction is P(1),P(3)-bis(5'-adenosyl) triphosphate + H2O = AMP + ADP + 2 H(+). It carries out the reaction P(1),P(4)-bis(5'-adenosyl) tetraphosphate + H2O = AMP + ATP + 2 H(+). The enzyme catalyses P(1),P(5)-bis(5'-adenosyl) pentaphosphate + H2O = adenosine 5'-tetraphosphate + AMP + 2 H(+). It catalyses the reaction P(1),P(4)-bis(5'-guanosyl) tetraphosphate + H2O = GMP + GTP + 2 H(+). Functionally, hydrolase that metabolizes extracellular nucleotides, including ATP, GTP, UTP and CTP. Limits mast cells and basophils response during inflammation and during the chronic phases of allergic responses by eliminating extracellular ATP, a signaling molecule activating these cells in an autocrine manner. Metabolizes extracellular ATP in the lumen of the small intestine, and thereby prevents ATP-induced apoptosis of intestinal plasmacytoid dendritic cells. Has a broad specificity and can also hydrolyze UDP-GlcNAc into UMP and GlcNAc-1-phosphate and potentially several other intracellular nucleotide sugars, including UDP-GalNAc, CMP-NeuAc, GDP-Fuc, and UDP-GlcA. Thereby, could modulate glycan biosynthesis and protein glycosylation. Can hydrolyze extracellular dinucleoside polyphosphates, including the vasoactive adenosine polyphosphates as well. In addition, displays an alkaline phosphodiesterase activity in vitro. In Mus musculus (Mouse), this protein is Ectonucleotide pyrophosphatase/phosphodiesterase family member 3.